The following is a 387-amino-acid chain: MNLHEYQAKDLLESYGLKVQKGIVAHNPNEAAQAFDQLGGKFAVIKAQVHAGGRGKAGGVKVVKSSQEAREVAESLIGKNLVTFQTDAEGQPVNSVGIFEDVYPVTRELYLGAVVDRSSRKVTFMASTEGGVDIEEVAHNSPEKILKVEVDPLVGLQPFQAREVAFKLGLEGKQINDFVKTMLGAYKAFIECDFALFEINPLAVRENGEIVCVDGKINLDSNALYRHPKLLALRDKSQENAKELKASEHELNYVALEGNIGCMVNGAGLAMATMDIIQLYGGKPANFLDVGGGATKERVIEAFKLILDDENVKAVLINIFGGIVRCDMIAEAIIEAVKEVNVTVPVVVRLEGNNAEKGAKILADSGLKLIPADGLADAADKVVKSLG.

An ATP-grasp domain is found at 9–245 (KDLLESYGLK…KSQENAKELK (237 aa)). ATP contacts are provided by residues Lys-46, 53–55 (GRG), Glu-100, Tyr-103, and Glu-108. Residues Asn-200 and Asp-214 each contribute to the Mg(2+) site. Substrate contacts are provided by residues Asn-265 and 322-324 (GIV).

The protein belongs to the succinate/malate CoA ligase beta subunit family. As to quaternary structure, heterotetramer of two alpha and two beta subunits. The cofactor is Mg(2+).

The enzyme catalyses succinate + ATP + CoA = succinyl-CoA + ADP + phosphate. It carries out the reaction GTP + succinate + CoA = succinyl-CoA + GDP + phosphate. The protein operates within carbohydrate metabolism; tricarboxylic acid cycle; succinate from succinyl-CoA (ligase route): step 1/1. Functionally, succinyl-CoA synthetase functions in the citric acid cycle (TCA), coupling the hydrolysis of succinyl-CoA to the synthesis of either ATP or GTP and thus represents the only step of substrate-level phosphorylation in the TCA. The beta subunit provides nucleotide specificity of the enzyme and binds the substrate succinate, while the binding sites for coenzyme A and phosphate are found in the alpha subunit. The chain is Succinate--CoA ligase [ADP-forming] subunit beta from Francisella tularensis subsp. holarctica (strain OSU18).